Reading from the N-terminus, the 176-residue chain is Isopentenyl-diphosphate Delta-isomerase (176 aa).

The Mn(2+) site is built by His-23 and His-29. Residues 27–161 (LRHLAISVFV…PERFTPWLKI (135 aa)) enclose the Nudix hydrolase domain. The active site involves Cys-63. Cys-63 contacts Mg(2+). His-65 contributes to the Mn(2+) binding site. Glu-83 is a Mg(2+) binding site. Mn(2+) contacts are provided by Glu-109 and Glu-111. The active site involves Glu-111.

Belongs to the IPP isomerase type 1 family. Requires Mg(2+) as cofactor. Mn(2+) is required as a cofactor.

It localises to the cytoplasm. It carries out the reaction isopentenyl diphosphate = dimethylallyl diphosphate. It participates in isoprenoid biosynthesis; dimethylallyl diphosphate biosynthesis; dimethylallyl diphosphate from isopentenyl diphosphate: step 1/1. It functions in the pathway porphyrin-containing compound metabolism; chlorophyll biosynthesis. Catalyzes the 1,3-allylic rearrangement of the homoallylic substrate isopentenyl (IPP) to its highly electrophilic allylic isomer, dimethylallyl diphosphate (DMAPP). The sequence is that of Isopentenyl-diphosphate Delta-isomerase from Rhodobacter capsulatus (strain ATCC BAA-309 / NBRC 16581 / SB1003).